Reading from the N-terminus, the 156-residue chain is Small ribosomal subunit protein uS7 (156 aa).

Belongs to the universal ribosomal protein uS7 family. In terms of assembly, part of the 30S ribosomal subunit. Contacts proteins S9 and S11.

Functionally, one of the primary rRNA binding proteins, it binds directly to 16S rRNA where it nucleates assembly of the head domain of the 30S subunit. Is located at the subunit interface close to the decoding center, probably blocks exit of the E-site tRNA. The chain is Small ribosomal subunit protein uS7 from Bordetella bronchiseptica (strain ATCC BAA-588 / NCTC 13252 / RB50) (Alcaligenes bronchisepticus).